We begin with the raw amino-acid sequence, 123 residues long: KQFTKCELSQVLKSMDGYKGVTLPEWICTIFHSSGYDTQTIVKNNGKTEYGLFQINNKMWCRDNQILPSRNICGISCDKFLDDDLTDDVMCAKKILDSEGIDYWLAHKPLCSEKLEQWLCEEL.

Positions 1 to 123 constitute a C-type lysozyme domain; that stretch reads KQFTKCELSQ…KLEQWLCEEL (123 aa). Disulfide bonds link cysteine 6/cysteine 120, cysteine 28/cysteine 111, cysteine 61/cysteine 77, and cysteine 73/cysteine 91. Residues lysine 79, aspartate 82, aspartate 84, aspartate 87, and aspartate 88 each coordinate Ca(2+).

It belongs to the glycosyl hydrolase 22 family. Lactose synthase (LS) is a heterodimer of a catalytic component, beta1,4-galactosyltransferase (beta4Gal-T1) and a regulatory component, alpha-lactalbumin (LA). As to expression, mammary gland specific. Secreted in milk.

Its subcellular location is the secreted. In terms of biological role, regulatory subunit of lactose synthase, changes the substrate specificity of galactosyltransferase in the mammary gland making glucose a good acceptor substrate for this enzyme. This enables LS to synthesize lactose, the major carbohydrate component of milk. In other tissues, galactosyltransferase transfers galactose onto the N-acetylglucosamine of the oligosaccharide chains in glycoproteins. The chain is Alpha-lactalbumin A from Equus caballus (Horse).